Here is a 685-residue protein sequence, read N- to C-terminus: Phenoloxidase subunit 1 (685 aa).

A propeptide spanning residues 1–51 (MSDAKNNLLLFFDRPSEPCFMQKGEENAVFEIPDNYYPEKYQRVSNAIGNR) is cleaved from the precursor. Residue Asn184 is glycosylated (N-linked (GlcNAc...) asparagine). Positions 209, 213, and 239 each coordinate Cu cation. N-linked (GlcNAc...) asparagine glycans are attached at residues Asn254 and Asn324. Glu351 acts as the Proton acceptor in catalysis. His366, His370, and His406 together coordinate Cu cation. Residues Asn491 and Asn540 are each glycosylated (N-linked (GlcNAc...) asparagine). Cystine bridges form between Cys581–Cys623 and Cys583–Cys630.

In terms of assembly, heterodimer. The cofactor is Cu(2+). The N-terminus is blocked. In terms of tissue distribution, synthesized by hemocytes and released into the hemolymph plasma.

Its subcellular location is the secreted. The enzyme catalyses 2 L-dopa + O2 = 2 L-dopaquinone + 2 H2O. The catalysed reaction is L-tyrosine + O2 = L-dopaquinone + H2O. Its function is as follows. This is a copper-containing oxidase that functions in the formation of pigments such as melanins and other polyphenolic compounds. Catalyzes the rate-limiting conversions of tyrosine to DOPA, DOPA to DOPA-quinone and possibly 5,6 dihydroxyindole to indole-5'6 quinone. The chain is Phenoloxidase subunit 1 from Bombyx mori (Silk moth).